A 178-amino-acid chain; its full sequence is MEQYHGTTIVSVRRGNQVALGGDGQVTLGNIVMKGTARKVRRIYNGKVLVGFAGSTADAFSLLDRFEAKLEKYQGNLTRAAVDLAKDWRSDRALRRLEAMLITADKDTTLVITGNGDVLDPEGGIAAIGSGGAYAQSAAKALVENTELPPKDVVEKALTIAGELCIYTNTNFVIETLD.

The active site involves Thr7. The Na(+) site is built by Gly162, Cys165, and Thr168.

This sequence belongs to the peptidase T1B family. HslV subfamily. In terms of assembly, a double ring-shaped homohexamer of HslV is capped on each side by a ring-shaped HslU homohexamer. The assembly of the HslU/HslV complex is dependent on binding of ATP.

It localises to the cytoplasm. The enzyme catalyses ATP-dependent cleavage of peptide bonds with broad specificity.. Its activity is regulated as follows. Allosterically activated by HslU binding. In terms of biological role, protease subunit of a proteasome-like degradation complex believed to be a general protein degrading machinery. This Cupriavidus metallidurans (strain ATCC 43123 / DSM 2839 / NBRC 102507 / CH34) (Ralstonia metallidurans) protein is ATP-dependent protease subunit HslV.